A 506-amino-acid chain; its full sequence is Chromosomal replication initiator protein DnaA (506 aa).

The tract at residues 1-87 is domain I, interacts with DnaA modulators; sequence MSVELWQQCV…IGSRRSSAPR (87 aa). Residues 87–169 are domain II; sequence RAAPNAPVSA…QVEGALKHTS (83 aa). A disordered region spans residues 135–154; the sequence is DSFDAMAEPAAAPPSGGGRA. The span at 139 to 148 shows a compositional bias: low complexity; that stretch reads AMAEPAAAPP. The domain III, AAA+ region stretch occupies residues 170–386; that stretch reads YLNRTFTFDT…GALKRVIAHS (217 aa). ATP is bound by residues Gly-214, Gly-216, Lys-217, and Thr-218. Residues 387–506 are domain IV, binds dsDNA; sequence HFMGRDITIE…YKNLLRTLTT (120 aa).

It belongs to the DnaA family. Oligomerizes as a right-handed, spiral filament on DNA at oriC.

It localises to the cytoplasm. Plays an essential role in the initiation and regulation of chromosomal replication. ATP-DnaA binds to the origin of replication (oriC) to initiate formation of the DNA replication initiation complex once per cell cycle. Binds the DnaA box (a 9 base pair repeat at the origin) and separates the double-stranded (ds)DNA. Forms a right-handed helical filament on oriC DNA; dsDNA binds to the exterior of the filament while single-stranded (ss)DNA is stabiized in the filament's interior. The ATP-DnaA-oriC complex binds and stabilizes one strand of the AT-rich DNA unwinding element (DUE), permitting loading of DNA polymerase. After initiation quickly degrades to an ADP-DnaA complex that is not apt for DNA replication. Binds acidic phospholipids. Functionally, non-cooperatively binds DnaA boxes in the minimal plasmid RK2 replication origin (oriV). In vitro in the presence of plasmid RK2-derived TrfA and E.coli protein HU, forms an open complex at oriV. This complex was not however competent for formation of a pre-priming complex with E.coli DnaB and DnaC. Broad host range plasmid RK2 requires not only DnaA for replication but also TrfA and host factors. The protein is Chromosomal replication initiator protein DnaA of Pseudomonas putida (strain ATCC 47054 / DSM 6125 / CFBP 8728 / NCIMB 11950 / KT2440).